Reading from the N-terminus, the 291-residue chain is Acetyl-coenzyme A carboxylase carboxyl transferase subunit beta (291 aa).

The CoA carboxyltransferase N-terminal domain maps to 23–291; the sequence is VYTKDPVSGE…TPASASVAKS (269 aa).

This sequence belongs to the AccD/PCCB family. As to quaternary structure, acetyl-CoA carboxylase is a heterohexamer composed of biotin carboxyl carrier protein (AccB), biotin carboxylase (AccC) and two subunits each of ACCase subunit alpha (AccA) and ACCase subunit beta (AccD).

It is found in the cytoplasm. It carries out the reaction N(6)-carboxybiotinyl-L-lysyl-[protein] + acetyl-CoA = N(6)-biotinyl-L-lysyl-[protein] + malonyl-CoA. It participates in lipid metabolism; malonyl-CoA biosynthesis; malonyl-CoA from acetyl-CoA: step 1/1. Component of the acetyl coenzyme A carboxylase (ACC) complex. Biotin carboxylase (BC) catalyzes the carboxylation of biotin on its carrier protein (BCCP) and then the CO(2) group is transferred by the transcarboxylase to acetyl-CoA to form malonyl-CoA. The polypeptide is Acetyl-coenzyme A carboxylase carboxyl transferase subunit beta (Opitutus terrae (strain DSM 11246 / JCM 15787 / PB90-1)).